A 1014-amino-acid chain; its full sequence is Probable sucrose-phosphate synthase 5 (1014 aa).

Composition is skewed to basic and acidic residues over residues 29-41 and 49-58; these read RRLE…REAA and EGEKDGKPDT. 2 disordered regions span residues 29-108 and 648-677; these read RRLE…SDEE and QLLR…SSEP.

The protein belongs to the glycosyltransferase 1 family. Homodimer or homotetramer. In terms of tissue distribution, expressed in germinating seeds.

The catalysed reaction is beta-D-fructose 6-phosphate + UDP-alpha-D-glucose = sucrose 6(F)-phosphate + UDP + H(+). The protein operates within glycan biosynthesis; sucrose biosynthesis; sucrose from D-fructose 6-phosphate and UDP-alpha-D-glucose: step 1/2. With respect to regulation, activity is regulated by phosphorylation and moderated by concentration of metabolites and light. Its function is as follows. Plays a role in photosynthetic sucrose synthesis by catalyzing the rate-limiting step of sucrose biosynthesis from UDP-glucose and fructose- 6-phosphate. Involved in the regulation of carbon partitioning in the leaves of plants. May regulate the synthesis of sucrose and therefore play a major role as a limiting factor in the export of photoassimilates out of the leaf. Plays a role for sucrose availability that is essential for plant growth and fiber elongation. This chain is Probable sucrose-phosphate synthase 5 (SPS5), found in Oryza sativa subsp. japonica (Rice).